Here is a 297-residue protein sequence, read N- to C-terminus: Large ribosomal subunit protein uL18 (297 aa).

It belongs to the universal ribosomal protein uL18 family. As to quaternary structure, component of the large ribosomal subunit (LSU).

The protein localises to the cytoplasm. Its subcellular location is the nucleus. Its function is as follows. Component of the ribosome, a large ribonucleoprotein complex responsible for the synthesis of proteins in the cell. The small ribosomal subunit (SSU) binds messenger RNAs (mRNAs) and translates the encoded message by selecting cognate aminoacyl-transfer RNA (tRNA) molecules. The large subunit (LSU) contains the ribosomal catalytic site termed the peptidyl transferase center (PTC), which catalyzes the formation of peptide bonds, thereby polymerizing the amino acids delivered by tRNAs into a polypeptide chain. The nascent polypeptides leave the ribosome through a tunnel in the LSU and interact with protein factors that function in enzymatic processing, targeting, and the membrane insertion of nascent chains at the exit of the ribosomal tunnel. The protein is Large ribosomal subunit protein uL18 (RpL5) of Aedes aegypti (Yellowfever mosquito).